A 391-amino-acid polypeptide reads, in one-letter code: Oxygen-dependent coproporphyrinogen-III oxidase, chloroplastic (391 aa).

Positions 1–13 are enriched in polar residues; sequence MASSLLTTPSQTL. The disordered stretch occupies residues 1 to 34; the sequence is MASSLLTTPSQTLAPNPAAARARRSSPAAAQVSF. Low complexity predominate over residues 14-30; the sequence is APNPAAARARRSSPAAA. An important for dimerization region spans residues 125-134; the sequence is VLQDGNVFEK. S179 contributes to the substrate binding site. The active-site Proton donor is the H193. Substrate is bound by residues 195-197 and 349-354; these read NYR and GGRIES. The interval 331 to 366 is important for dimerization; that stretch reads YVEFNLVYDRGTTFGLKTGGRIESILVSLPLTARWE.

It belongs to the aerobic coproporphyrinogen-III oxidase family. Homodimer.

Its subcellular location is the plastid. It localises to the chloroplast. It catalyses the reaction coproporphyrinogen III + O2 + 2 H(+) = protoporphyrinogen IX + 2 CO2 + 2 H2O. The protein operates within porphyrin-containing compound metabolism; protoporphyrin-IX biosynthesis; protoporphyrinogen-IX from coproporphyrinogen-III (O2 route): step 1/1. In terms of biological role, involved in the heme and chlorophyll biosynthesis. Catalyzes the aerobic oxidative decarboxylation of propionate groups of rings A and B of coproporphyrinogen-III to yield the vinyl groups in protoporphyrinogen-IX. In Hordeum vulgare (Barley), this protein is Oxygen-dependent coproporphyrinogen-III oxidase, chloroplastic (CPX).